A 255-amino-acid polypeptide reads, in one-letter code: 5'-nucleotidase SurE (255 aa).

Residues Asp8, Asp9, Ser39, and Asn95 each contribute to the a divalent metal cation site.

It belongs to the SurE nucleotidase family. Requires a divalent metal cation as cofactor.

Its subcellular location is the cytoplasm. It catalyses the reaction a ribonucleoside 5'-phosphate + H2O = a ribonucleoside + phosphate. Its function is as follows. Nucleotidase that shows phosphatase activity on nucleoside 5'-monophosphates. In Rubrivivax gelatinosus (strain NBRC 100245 / IL144), this protein is 5'-nucleotidase SurE.